An 827-amino-acid chain; its full sequence is Leucine--tRNA ligase (827 aa).

Positions 46–56 (PYPSGRIHMGH) match the 'HIGH' region motif. Residues 585–589 (KMSKS) carry the 'KMSKS' region motif. An ATP-binding site is contributed by lysine 588.

The protein belongs to the class-I aminoacyl-tRNA synthetase family.

Its subcellular location is the cytoplasm. The catalysed reaction is tRNA(Leu) + L-leucine + ATP = L-leucyl-tRNA(Leu) + AMP + diphosphate. The sequence is that of Leucine--tRNA ligase from Desulfotalea psychrophila (strain LSv54 / DSM 12343).